A 1111-amino-acid chain; its full sequence is Atrial natriuretic peptide-converting enzyme (1111 aa).

The Cytoplasmic portion of the chain corresponds to 1–112; that stretch reads MGRVSFNVRV…QKLVTANLLR (112 aa). Positions 93–96 match the DDNN motif motif; the sequence is ADSS. The chain crosses the membrane as a helical; Signal-anchor for type II membrane protein span at residues 113–133; the sequence is FLLLVLIPCICALIVLLAILL. Over 134–1111 the chain is Extracellular; the sequence is SFVGTLKKVY…QTFLQKKSQG (978 aa). An N-linked (GlcNAc...) asparagine glycan is attached at Asn147. Residues 199 to 325 form the FZ 1 domain; the sequence is GNTSTCVNIT…SDASRICFSL (127 aa). Cystine bridges form between Cys204–Cys264, Cys212–Cys257, Cys248–Cys288, Cys277–Cys322, Cys281–Cys305, Cys335–Cys348, Cys343–Cys361, Cys355–Cys370, Cys372–Cys384, Cys379–Cys397, Cys391–Cys406, Cys408–Cys421, Cys416–Cys434, Cys428–Cys443, Cys445–Cys458, Cys453–Cys471, Cys465–Cys480, Cys521–Cys584, Cys529–Cys577, Cys568–Cys606, Cys595–Cys636, Cys599–Cys623, Cys646–Cys658, Cys653–Cys671, Cys665–Cys680, Cys682–Cys696, Cys690–Cys709, Cys703–Cys718, Cys721–Cys733, Cys728–Cys746, and Cys740–Cys755. Asn296 carries N-linked (GlcNAc...) asparagine glycosylation. LDL-receptor class A domains lie at 334–371, 371–407, 407–444, and 444–481; these read LCGG…AHCN, NCSE…QNCD, DCNL…VNCS, and SCPS…ENCS. Residue Asn409 is glycosylated (N-linked (GlcNAc...) asparagine). Residues 516–639 form the FZ 2 domain; it reads SNCSHCEPIT…SSDNQTCLLP (124 aa). Asn535 is a glycosylation site (N-linked (GlcNAc...) asparagine). 3 consecutive LDL-receptor class A domains span residues 645–681, 681–719, and 720–756; these read ECSP…ENCG, GCKE…KNCS, and FCQD…WGCV. The SRCR domain occupies 756-851; the sequence is VTLSKNGNSS…SGSEISLLCT (96 aa). Asn763 carries N-linked (GlcNAc...) asparagine glycosylation. 4 disulfide bridges follow: Cys855-Cys977, Cys893-Cys909, Cys991-Cys1056, and Cys1020-Cys1035. The region spanning 867 to 1100 is the Peptidase S1 domain; the sequence is ILGGRTSRPG…FVDWIERQIY (234 aa). Catalysis depends on charge relay system residues His908 and Asp957. Residue Ser1050 is the Charge relay system of the active site.

It belongs to the peptidase S1 family. In terms of processing, N-glycosylated; required for processing and activation. Activated through proteolytic processing by a trypsin-like protease; cleaved into a N-terminal propeptide and an activated corin protease fragment. Atrial natriuretic peptide-converting enzyme, 180 kDa soluble fragment is produced by cleavage by ADAM10. Cleavage by ADAM10 to produce soluble 180 kDa soluble fragment takes place after the transmembrane region and before FZ 1. Post-translationally, a disulfide bond links the activated corin protease fragment and the N-terminal propeptide. The disulfide bond also links the activated corin protease fragment with Atrial natriuretic peptide-converting enzyme, 180 kDa soluble fragment. As to expression, specifically expressed in heart. Also detected in kidney, aorta, brain and testis. In kidney, present in epithelial cells, with segmental expression in the proximal tubule, thick ascending limb, connecting tubule, and throughout the collecting duct (at protein level).

It is found in the cell membrane. It localises to the cytoplasmic vesicle. Its subcellular location is the secreted. Serine-type endopeptidase involved in atrial natriuretic peptide (NPPA) processing. Converts through proteolytic cleavage the non-functional propeptide NPPA into the active hormone, thereby regulating blood pressure in heart and promoting natriuresis, diuresis and vasodilation. Proteolytic cleavage of pro-NPPA also plays a role in female pregnancy by promoting trophoblast invasion and spiral artery remodeling in uterus. Also acts as a regulator of sodium reabsorption in kidney. May also process pro-NPPB the B-type natriuretic peptide. This Rattus norvegicus (Rat) protein is Atrial natriuretic peptide-converting enzyme (Corin).